Reading from the N-terminus, the 75-residue chain is Bacteriocin lactacin-F subunit LafA (75 aa).

The propeptide occupies 1 to 18 (MKQFNYLSHKDLAVVVGG).

This sequence belongs to the bacteriocin class IIB family. In terms of assembly, this bacteriocin depends upon the complementation of two peptides for activity: LafA and LafX. Associated with a 180 kDa bacteriocin complex.

In terms of biological role, heat stable bacteriocin active against Enterococcus faecalis and other Lactobacilli. The chain is Bacteriocin lactacin-F subunit LafA (lafA) from Lactobacillus johnsonii (strain CNCM I-12250 / La1 / NCC 533).